A 510-amino-acid polypeptide reads, in one-letter code: Lysine--tRNA ligase (510 aa).

Residues Glu420 and Glu427 each contribute to the Mg(2+) site.

It belongs to the class-II aminoacyl-tRNA synthetase family. Homodimer. Mg(2+) serves as cofactor.

It localises to the cytoplasm. The catalysed reaction is tRNA(Lys) + L-lysine + ATP = L-lysyl-tRNA(Lys) + AMP + diphosphate. The chain is Lysine--tRNA ligase from Clostridium novyi (strain NT).